A 304-amino-acid polypeptide reads, in one-letter code: Acetyl-coenzyme A carboxylase carboxyl transferase subunit beta (304 aa).

The 270-residue stretch at 23–292 (VWTKCDSCGQ…PNPEAPREGV (270 aa)) folds into the CoA carboxyltransferase N-terminal domain. Zn(2+)-binding residues include Cys-27, Cys-30, Cys-46, and Cys-49. The C4-type zinc finger occupies 27 to 49 (CDSCGQVLYRAELERNLEVCPKC). The tract at residues 284 to 304 (NPEAPREGVVVPPVPDQEPEA) is disordered. Positions 295 to 304 (PPVPDQEPEA) are enriched in pro residues.

It belongs to the AccD/PCCB family. As to quaternary structure, acetyl-CoA carboxylase is a heterohexamer composed of biotin carboxyl carrier protein (AccB), biotin carboxylase (AccC) and two subunits each of ACCase subunit alpha (AccA) and ACCase subunit beta (AccD). The cofactor is Zn(2+).

Its subcellular location is the cytoplasm. It catalyses the reaction N(6)-carboxybiotinyl-L-lysyl-[protein] + acetyl-CoA = N(6)-biotinyl-L-lysyl-[protein] + malonyl-CoA. The protein operates within lipid metabolism; malonyl-CoA biosynthesis; malonyl-CoA from acetyl-CoA: step 1/1. In terms of biological role, component of the acetyl coenzyme A carboxylase (ACC) complex. Biotin carboxylase (BC) catalyzes the carboxylation of biotin on its carrier protein (BCCP) and then the CO(2) group is transferred by the transcarboxylase to acetyl-CoA to form malonyl-CoA. The protein is Acetyl-coenzyme A carboxylase carboxyl transferase subunit beta of Shigella flexneri.